The primary structure comprises 950 residues: Glycine dehydrogenase (decarboxylating) (950 aa).

K698 bears the N6-(pyridoxal phosphate)lysine mark.

It belongs to the GcvP family. As to quaternary structure, the glycine cleavage system is composed of four proteins: P, T, L and H. It depends on pyridoxal 5'-phosphate as a cofactor.

It carries out the reaction N(6)-[(R)-lipoyl]-L-lysyl-[glycine-cleavage complex H protein] + glycine + H(+) = N(6)-[(R)-S(8)-aminomethyldihydrolipoyl]-L-lysyl-[glycine-cleavage complex H protein] + CO2. Its function is as follows. The glycine cleavage system catalyzes the degradation of glycine. The P protein binds the alpha-amino group of glycine through its pyridoxal phosphate cofactor; CO(2) is released and the remaining methylamine moiety is then transferred to the lipoamide cofactor of the H protein. In Neisseria meningitidis serogroup C (strain 053442), this protein is Glycine dehydrogenase (decarboxylating).